The chain runs to 259 residues: ATP synthase subunit a 1 (259 aa).

The next 5 membrane-spanning stretches (helical) occupy residues 30-50 (TLHV…LFFF), 90-110 (LIAP…AMDL), 135-155 (DLNA…FYSL), 209-229 (LIFI…SFPW), and 230-250 (AVFH…LTIV).

This sequence belongs to the ATPase A chain family. In terms of assembly, F-type ATPases have 2 components, CF(1) - the catalytic core - and CF(0) - the membrane proton channel. CF(1) has five subunits: alpha(3), beta(3), gamma(1), delta(1), epsilon(1). CF(0) has three main subunits: a(1), b(2) and c(9-12). The alpha and beta chains form an alternating ring which encloses part of the gamma chain. CF(1) is attached to CF(0) by a central stalk formed by the gamma and epsilon chains, while a peripheral stalk is formed by the delta and b chains.

Its subcellular location is the cell inner membrane. Functionally, key component of the proton channel; it plays a direct role in the translocation of protons across the membrane. The polypeptide is ATP synthase subunit a 1 (Methylococcus capsulatus (strain ATCC 33009 / NCIMB 11132 / Bath)).